The primary structure comprises 711 residues: MND1-interacting protein 1 (711 aa).

The stretch at 390–648 (EWAQKNAMQA…LEGSYDNEAN (259 aa)) forms a coiled coil. Disordered regions lie at residues 552 to 571 (EALAQMEEEQRSKEAAEGHN) and 602 to 622 (RLKASSDSDSSHISNNAWKPK). Positions 602–611 (RLKASSDSDS) are enriched in basic and acidic residues. The RING-type zinc finger occupies 653–697 (CIICMKDEVSVVFLPCAHQVVCGSCSDSFFASNNGGSKVTCPCCR).

As to quaternary structure, interacts (via C-terminal domain) with MND1 and HOP2. Interacts with XRI1 (via C-terminal domain).

The polypeptide is MND1-interacting protein 1 (MIP1) (Arabidopsis thaliana (Mouse-ear cress)).